A 586-amino-acid polypeptide reads, in one-letter code: uncharacterized protein (586 aa).

Disordered stretches follow at residues 17 to 64 and 80 to 123; these read VRRT…ETEE and HSCS…GGAN. Polar residues predominate over residues 28-37; that stretch reads PSTSGSIAWT. Low complexity-rich tracts occupy residues 38-52 and 80-91; these read SSES…VSSS and HSCSAATTSQQS. Over residues 94–110 the composition is skewed to basic and acidic residues; sequence QSKEHRIGGIKKEEKPI. Residues 112–123 show a composition bias toward gly residues; the sequence is MGGGSSENGGAN. 12 consecutive transmembrane segments (helical) span residues 151-171, 191-211, 218-238, 243-263, 283-303, 317-337, 375-395, 413-433, 441-461, 466-486, 513-533, and 536-556; these read WVIL…WIQY, WTSM…AWLL, LSVL…LLST, FWVT…TLGI, LGVF…PLIV, TLFL…ICFF, FVIL…ISTL, YVGL…GFIL, LTTI…TLTI, MVLV…YLPI, IFGI…GTFT, and IIMS…REDL.

The protein belongs to the major facilitator superfamily. Feline leukemia virus subgroup C receptor (TC 2.A.1.28.1) family.

Its subcellular location is the membrane. This is an uncharacterized protein from Caenorhabditis elegans.